Here is a 372-residue protein sequence, read N- to C-terminus: N-methyl-L-tryptophan oxidase (372 aa).

An FAD-binding site is contributed by 4 to 34 (DLIIIGSGSVGAAAGYYATRAGLNVLMTDAH). S-8alpha-FAD cysteine is present on cysteine 308.

Belongs to the MSOX/MTOX family. MTOX subfamily. Monomer. The cofactor is FAD.

The enzyme catalyses N(alpha)-methyl-L-tryptophan + O2 + H2O = L-tryptophan + formaldehyde + H2O2. In terms of biological role, catalyzes the oxidative demethylation of N-methyl-L-tryptophan. The polypeptide is N-methyl-L-tryptophan oxidase (Escherichia coli O6:H1 (strain CFT073 / ATCC 700928 / UPEC)).